The sequence spans 283 residues: MLLVHAHPDDETIMTGGTIARYLDEGVDVRVLTFTLGEEGEVIGDRWAQLVADGGADQLGGFRIGELTGALAALSPPGGSPVQPWFLGGAGRWRDSGMAGSAAARHPRALVNAGFDEPVGVLTDILESFAPQVVITYDSAGTYGHPDHKLVHEVTAAALARVAASRPEQIKVYESVTEHSALQAGLVAAARRVPDGWRMPGPGELPSYPDAMVTAEIDVRTQYDRKVAALAAHATQVTVAPSGTEYALSNNIVQPIFGHEHFIRVDAAAVAGPRETDLFDGIG.

Zn(2+) contacts are provided by His7, Asp10, and His148.

Belongs to the MshB deacetylase family. Zn(2+) serves as cofactor.

The catalysed reaction is 1D-myo-inositol 2-acetamido-2-deoxy-alpha-D-glucopyranoside + H2O = 1D-myo-inositol 2-amino-2-deoxy-alpha-D-glucopyranoside + acetate. Its function is as follows. Catalyzes the deacetylation of 1D-myo-inositol 2-acetamido-2-deoxy-alpha-D-glucopyranoside (GlcNAc-Ins) in the mycothiol biosynthesis pathway. This Gordonia bronchialis (strain ATCC 25592 / DSM 43247 / BCRC 13721 / JCM 3198 / KCTC 3076 / NBRC 16047 / NCTC 10667) (Rhodococcus bronchialis) protein is 1D-myo-inositol 2-acetamido-2-deoxy-alpha-D-glucopyranoside deacetylase.